The chain runs to 394 residues: QWRF motif-containing protein 7 (394 aa).

The interval 1-171 (MATTGRRLRP…ESPVSKAKIR (171 aa)) is disordered. Low complexity predominate over residues 14–67 (NNNRSRTISSSISLPVSLNASLSSSTSSSSSSSPSNSSKRVMITRSQSTTRSSR). Positions 85-96 (NSASRSQEINNG) are enriched in polar residues. The span at 97-110 (RSRESFARYLEQRT) shows a compositional bias: basic and acidic residues. 2 stretches are compositionally biased toward polar residues: residues 111–120 (RGSPRSNASS) and 142–157 (TMKT…TSMC). The QWRF motif motif lies at 211–214 (QWRF).

This sequence belongs to the QWRF family.

The polypeptide is QWRF motif-containing protein 7 (QWRF7) (Arabidopsis thaliana (Mouse-ear cress)).